The primary structure comprises 180 residues: ATP-dependent protease subunit HslV (180 aa).

Residue T5 is part of the active site. Na(+) is bound by residues G165, C168, and T171.

The protein belongs to the peptidase T1B family. HslV subfamily. A double ring-shaped homohexamer of HslV is capped on each side by a ring-shaped HslU homohexamer. The assembly of the HslU/HslV complex is dependent on binding of ATP.

It is found in the cytoplasm. The catalysed reaction is ATP-dependent cleavage of peptide bonds with broad specificity.. Its activity is regulated as follows. Allosterically activated by HslU binding. Protease subunit of a proteasome-like degradation complex believed to be a general protein degrading machinery. The sequence is that of ATP-dependent protease subunit HslV from Helicobacter acinonychis (strain Sheeba).